The following is a 324-amino-acid chain: MTKEFHAVGERSVVTTAVDAPQARHARRPAELLKAYAGLIKPRVIELLLVTTIPAMLLAARGIPSPWLVIATLVGGTMAAGSANALNCVADADIDQVMKRTRARPLVRHTVSNRHALVFGIALGAGSFGWLWATTNLLSAVLAVATILFYVFVYTLVLKRRTAQNIVWGGAAGCMPVVIGWAGVTGRVDWPALVMFGIIFFWTPPHTWSLAMKYRDDYERAGVPMLPVVARPTYVSRQIVVFTWLMVLWTLLLAPATGWLYTAFAIAAGAWFLVLAHRLHAQTRRGEPTKPLKLFHLSNTYLMIVCVALAVDSALSLPVLGWPF.

The next 9 membrane-spanning stretches (helical) occupy residues 39–59 (LIKPRVIELLLVTTIPAMLLA), 63–83 (IPSPWLVIATLVGGTMAAGSA), 115–135 (HALVFGIALGAGSFGWLWATT), 137–157 (LLSAVLAVATILFYVFVYTLV), 166–186 (IVWGGAAGCMPVVIGWAGVTG), 192–212 (ALVMFGIIFFWTPPHTWSLAM), 239–259 (IVVFTWLMVLWTLLLAPATGW), 260–280 (LYTAFAIAAGAWFLVLAHRLH), and 302–322 (LMIVCVALAVDSALSLPVLGW).

Belongs to the UbiA prenyltransferase family. Protoheme IX farnesyltransferase subfamily.

It is found in the cell membrane. The catalysed reaction is heme b + (2E,6E)-farnesyl diphosphate + H2O = Fe(II)-heme o + diphosphate. The protein operates within porphyrin-containing compound metabolism; heme O biosynthesis; heme O from protoheme: step 1/1. Functionally, converts heme B (protoheme IX) to heme O by substitution of the vinyl group on carbon 2 of heme B porphyrin ring with a hydroxyethyl farnesyl side group. This is Protoheme IX farnesyltransferase 2 from Saccharopolyspora erythraea (strain ATCC 11635 / DSM 40517 / JCM 4748 / NBRC 13426 / NCIMB 8594 / NRRL 2338).